The chain runs to 327 residues: 2-methoxy-6-polyprenyl-1,4-benzoquinol methylase, mitochondrial (327 aa).

The transit peptide at 1-49 directs the protein to the mitochondrion; the sequence is MAAPRSCALWSYCGRGWSWAMRGCQLLGLRSSWPGAPLSARLLPQEKRA. S-adenosyl-L-methionine-binding positions include Thr-117, Asp-171, and 199–200; that span reads DA.

Belongs to the class I-like SAM-binding methyltransferase superfamily. MenG/UbiE family. Component of a multi-subunit COQ enzyme complex, composed of at least COQ3, COQ4, COQ5, COQ6, COQ7 and COQ9. Interacts with PYURF; the interaction is direct, stabilizes COQ5 protein and associates PYURF with COQ enzyme complex.

The protein localises to the mitochondrion inner membrane. The catalysed reaction is 2-methoxy-6-(all-trans-decaprenyl)benzene-1,4-diol + S-adenosyl-L-methionine = 5-methoxy-2-methyl-3-(all-trans-decaprenyl)benzene-1,4-diol + S-adenosyl-L-homocysteine + H(+). The protein operates within cofactor biosynthesis; ubiquinone biosynthesis. Methyltransferase required for the conversion of 2-decaprenyl-6-methoxy-1,4-benzoquinol (DDMQH2) to 2-decaprenyl-3-methyl-6-methoxy-1,4-benzoquinol (DMQH2). The polypeptide is 2-methoxy-6-polyprenyl-1,4-benzoquinol methylase, mitochondrial (Pongo abelii (Sumatran orangutan)).